The chain runs to 452 residues: UDP-glycosyltransferase 76D1 (452 aa).

UDP-alpha-D-glucose contacts are provided by residues Ser269, Ala329–Gln331, His346–Glu354, and Ser368–Gln371.

This sequence belongs to the UDP-glycosyltransferase family.

Functionally, possesses low quercetin 7-O-glucosyltransferase activity in vitro. The protein is UDP-glycosyltransferase 76D1 (UGT76D1) of Arabidopsis thaliana (Mouse-ear cress).